The sequence spans 177 residues: Protein SOB FIVE-LIKE 6 (177 aa).

An SOFL-A motif is present at residues S14–Y19. Disordered stretches follow at residues E37–C60 and K78–S104. The SOFL-B signature appears at S47–P56. Residues S79 to K90 show a composition bias toward basic residues.

Belongs to the SOFL plant protein family. As to expression, expressed in seedlings, flowers and siliques. Barely detectable in roots and leaves.

The protein localises to the cytoplasm. The protein resides in the nucleus. Functionally, involved in cytokinin-mediated development. This chain is Protein SOB FIVE-LIKE 6, found in Arabidopsis thaliana (Mouse-ear cress).